We begin with the raw amino-acid sequence, 175 residues long: Anterior gradient protein 2 homolog (175 aa).

A signal peptide spans Met-1–Ala-20. Residues Arg-21–Leu-40 are required to promote cell adhesion. 2 short sequence motifs (homodimer stabilization; interchain) span residues Ser-45–Trp-54 and Glu-60–Thr-67.

It belongs to the AGR family. Monomer and homodimer. Interacts with LYPD3 and DAG1 (alphaDAG1). Interacts with MUC2; disulfide-linked.

The protein localises to the secreted. Its subcellular location is the endoplasmic reticulum. Functionally, required for MUC2 post-transcriptional synthesis and secretion. May play a role in the production of mucus by intestinal cells. Proto-oncogene that may play a role in cell migration, cell differentiation and cell growth. Promotes cell adhesion. This Pongo abelii (Sumatran orangutan) protein is Anterior gradient protein 2 homolog (AGR2).